Consider the following 80-residue polypeptide: AACQLGTAASFARDKQDYPAVRSDGRQDSKDSTLDRIAKRCSEGGDFCSKNSECCDKKCQDEGEGRGVCLIVPQNVILLH.

The signal sequence occupies residues 1–8 (AACQLGTA). Residues 9-40 (ASFARDKQDYPAVRSDGRQDSKDSTLDRIAKR) constitute a propeptide that is removed on maturation. 3 disulfide bridges follow: cysteine 41–cysteine 55, cysteine 48–cysteine 59, and cysteine 54–cysteine 69.

It belongs to the conotoxin O1 superfamily. In terms of tissue distribution, expressed by the venom duct.

It localises to the secreted. This is Conotoxin Bu14 from Conus bullatus (Bubble cone).